The sequence spans 253 residues: Ribosomal RNA small subunit methyltransferase G (253 aa).

S-adenosyl-L-methionine-binding positions include Gly-84, Phe-89, 135 to 136, and Arg-154; that span reads AE. A disordered region spans residues 228–253; the sequence is TPAKYPRREGVPTHQPLFWKAKEQSR.

It belongs to the methyltransferase superfamily. RNA methyltransferase RsmG family.

It is found in the cytoplasm. Functionally, specifically methylates the N7 position of a guanine in 16S rRNA. The chain is Ribosomal RNA small subunit methyltransferase G from Deinococcus radiodurans (strain ATCC 13939 / DSM 20539 / JCM 16871 / CCUG 27074 / LMG 4051 / NBRC 15346 / NCIMB 9279 / VKM B-1422 / R1).